The primary structure comprises 233 residues: Purine nucleoside phosphorylase DeoD-type (233 aa).

H4 is an a purine D-ribonucleoside binding site. Phosphate-binding positions include G20, R24, R43, and 87 to 90; that span reads RVGT. Residues 178 to 180 and 202 to 203 each bind a purine D-ribonucleoside; these read EME and SD. D203 (proton donor) is an active-site residue.

It belongs to the PNP/UDP phosphorylase family. Homohexamer; trimer of homodimers.

The catalysed reaction is a purine D-ribonucleoside + phosphate = a purine nucleobase + alpha-D-ribose 1-phosphate. It carries out the reaction a purine 2'-deoxy-D-ribonucleoside + phosphate = a purine nucleobase + 2-deoxy-alpha-D-ribose 1-phosphate. Its function is as follows. Catalyzes the reversible phosphorolytic breakdown of the N-glycosidic bond in the beta-(deoxy)ribonucleoside molecules, with the formation of the corresponding free purine bases and pentose-1-phosphate. The chain is Purine nucleoside phosphorylase DeoD-type from Listeria monocytogenes serotype 4b (strain CLIP80459).